Consider the following 239-residue polypeptide: Endonuclease V (239 aa).

Mg(2+) contacts are provided by aspartate 48 and aspartate 116.

The protein belongs to the endonuclease V family. Requires Mg(2+) as cofactor.

The protein localises to the cytoplasm. It catalyses the reaction Endonucleolytic cleavage at apurinic or apyrimidinic sites to products with a 5'-phosphate.. In terms of biological role, DNA repair enzyme involved in the repair of deaminated bases. Selectively cleaves double-stranded DNA at the second phosphodiester bond 3' to a deoxyinosine leaving behind the intact lesion on the nicked DNA. The sequence is that of Endonuclease V from Xanthomonas oryzae pv. oryzae (strain MAFF 311018).